The primary structure comprises 429 residues: Phosphoribosylamine--glycine ligase (429 aa).

The ATP-grasp domain occupies 109–316 (KDFLARHQIP…LVELCLAAID (208 aa)). 135–196 (VREQGAPIVV…EEFLDGEEAS (62 aa)) contacts ATP. The disordered stretch occupies residues 212 to 234 (SQDHKRVGDKDTGPNTGGMGAYS). Over residues 213–223 (QDHKRVGDKDT) the composition is skewed to basic and acidic residues. Mg(2+) contacts are provided by E286 and N288.

This sequence belongs to the GARS family. Mg(2+) is required as a cofactor. It depends on Mn(2+) as a cofactor.

The catalysed reaction is 5-phospho-beta-D-ribosylamine + glycine + ATP = N(1)-(5-phospho-beta-D-ribosyl)glycinamide + ADP + phosphate + H(+). It functions in the pathway purine metabolism; IMP biosynthesis via de novo pathway; N(1)-(5-phospho-D-ribosyl)glycinamide from 5-phospho-alpha-D-ribose 1-diphosphate: step 2/2. This Vibrio vulnificus (strain YJ016) protein is Phosphoribosylamine--glycine ligase.